Here is a 229-residue protein sequence, read N- to C-terminus: Deleted in azoospermia-like (229 aa).

The RRM domain occupies 47–128; it reads NTLFVGGIDM…PAIMKERSSR (82 aa). One can recognise a DAZ domain in the interval 172–198; sequence PYSYSSPPGIMVPQVPMNYAQTTYAYQ.

This sequence belongs to the RRM DAZ family. Testis and ovary specific. In ovary, it is localized in the cortex of oocytes. At the onset of embryogenesis, maternal product is located at the vegetal pole, before migrating toward blastomeres through cytoplasmic streams as early embryogenesis proceededs.

The protein localises to the cytoplasm. Its function is as follows. RNA-binding protein involved in gametogenesis in both males and females. Acts by binding to the 3'-UTR of mRNA, specifically recognizing GUU triplets, and promoting the translation of key transcripts. Establishes oocyte polarity through interaction with Bucky ball (BUC). Interacts with Bucky ball (BUC) mRNA to mediate Balbiani body formation and oocyte polarity during early oogenesis. This chain is Deleted in azoospermia-like (dazl), found in Danio rerio (Zebrafish).